Here is a 285-residue protein sequence, read N- to C-terminus: uncharacterized protein (285 aa).

The Guanylate cyclase domain maps to 92-199 (TLLLADVEES…PTINRTARLR (108 aa)).

This sequence belongs to the adenylyl cyclase class-4/guanylyl cyclase family.

This is an uncharacterized protein from Mycobacterium tuberculosis (strain ATCC 25618 / H37Rv).